The following is a 250-amino-acid chain: Leucyl/phenylalanyl-tRNA--protein transferase (250 aa).

The protein belongs to the L/F-transferase family.

It is found in the cytoplasm. It carries out the reaction N-terminal L-lysyl-[protein] + L-leucyl-tRNA(Leu) = N-terminal L-leucyl-L-lysyl-[protein] + tRNA(Leu) + H(+). The catalysed reaction is N-terminal L-arginyl-[protein] + L-leucyl-tRNA(Leu) = N-terminal L-leucyl-L-arginyl-[protein] + tRNA(Leu) + H(+). It catalyses the reaction L-phenylalanyl-tRNA(Phe) + an N-terminal L-alpha-aminoacyl-[protein] = an N-terminal L-phenylalanyl-L-alpha-aminoacyl-[protein] + tRNA(Phe). Its function is as follows. Functions in the N-end rule pathway of protein degradation where it conjugates Leu, Phe and, less efficiently, Met from aminoacyl-tRNAs to the N-termini of proteins containing an N-terminal arginine or lysine. This Cupriavidus taiwanensis (strain DSM 17343 / BCRC 17206 / CCUG 44338 / CIP 107171 / LMG 19424 / R1) (Ralstonia taiwanensis (strain LMG 19424)) protein is Leucyl/phenylalanyl-tRNA--protein transferase.